Here is a 180-residue protein sequence, read N- to C-terminus: Non-specific lipid transfer protein GPI-anchored 3 (180 aa).

A signal peptide spans 1-22 (MEAVRFAVAVVLVFCYVTSSNA). 4 disulfide bridges follow: C41–C78, C48–C62, C63–C104, and C76–C113. N91 and N120 each carry an N-linked (GlcNAc...) asparagine glycan. 2 stretches are compositionally biased toward low complexity: residues 116–125 (SAGTNSSSTP) and 133–156 (PASSTSTGTGSGSTGNAAPSTAKP). The tract at residues 116-156 (SAGTNSSSTPPATPKTPPASSTSTGTGSGSTGNAAPSTAKP) is disordered. S158 carries the GPI-anchor amidated serine lipid modification. Positions 159-180 (SAPAINFGGLSFASAVVATLFF) are cleaved as a propeptide — removed in mature form.

This sequence belongs to the plant LTP family. As to expression, restricted to stamen, pollen and sporophytic tissues. Also detected, at low levels, in stems and leaves.

The protein resides in the cell membrane. Its function is as follows. Lipid transfer protein involved in seed and ovule maturation and development, probably by regulating the fatty acids homeostasis during suberin and sporopollenin biosynthesis or deposition. This Arabidopsis thaliana (Mouse-ear cress) protein is Non-specific lipid transfer protein GPI-anchored 3.